The chain runs to 202 residues: MKLLHIDSSVLGPHSVSRQVSAAIVDRLRQATPSLEVVYRDLTQTPLAHLSGSHLAAAQGAPAPAELGPDLAASAAVLNEFLAADVVVIGAPMYNFTIPSQLKAWIDRILVAGKTFQYGANGPQGLAGAKRVIVAISRGGYYGADMPTAAGEHLETYLRWVFGFIGITDPEFISADGIQVGPDHREKALAGALQAATSLQAA.

Residues Ser-9, 15-17 (SVS), 93-96 (MYNF), and 137-140 (SRGG) contribute to the FMN site.

It belongs to the azoreductase type 1 family. Homodimer. Requires FMN as cofactor.

It carries out the reaction 2 a quinone + NADH + H(+) = 2 a 1,4-benzosemiquinone + NAD(+). The enzyme catalyses N,N-dimethyl-1,4-phenylenediamine + anthranilate + 2 NAD(+) = 2-(4-dimethylaminophenyl)diazenylbenzoate + 2 NADH + 2 H(+). Quinone reductase that provides resistance to thiol-specific stress caused by electrophilic quinones. Its function is as follows. Also exhibits azoreductase activity. Catalyzes the reductive cleavage of the azo bond in aromatic azo compounds to the corresponding amines. The sequence is that of FMN-dependent NADH:quinone oxidoreductase 2 from Bradyrhizobium diazoefficiens (strain JCM 10833 / BCRC 13528 / IAM 13628 / NBRC 14792 / USDA 110).